A 377-amino-acid chain; its full sequence is GTP 3',8-cyclase (377 aa).

Positions 1–29 (MTTRLYLSPTPPRNDREGASKSTSASIKH) are disordered. Residues 45 to 271 (RFGRIARDLR…FTLSPAKEPR (227 aa)) enclose the Radical SAM core domain. Residue arginine 54 participates in GTP binding. Cysteine 61 and cysteine 65 together coordinate [4Fe-4S] cluster. Tyrosine 67 provides a ligand contact to S-adenosyl-L-methionine. Cysteine 68 provides a ligand contact to [4Fe-4S] cluster. Arginine 105 provides a ligand contact to GTP. Glycine 109 is an S-adenosyl-L-methionine binding site. Residue threonine 140 coordinates GTP. Residue serine 164 coordinates S-adenosyl-L-methionine. GTP is bound at residue lysine 201. Residue methionine 235 participates in S-adenosyl-L-methionine binding. Residues cysteine 304 and cysteine 307 each contribute to the [4Fe-4S] cluster site. 309–311 (RSR) lines the GTP pocket. Residue cysteine 321 coordinates [4Fe-4S] cluster.

The protein belongs to the radical SAM superfamily. MoaA family. As to quaternary structure, monomer and homodimer. Requires [4Fe-4S] cluster as cofactor.

The catalysed reaction is GTP + AH2 + S-adenosyl-L-methionine = (8S)-3',8-cyclo-7,8-dihydroguanosine 5'-triphosphate + 5'-deoxyadenosine + L-methionine + A + H(+). The protein operates within cofactor biosynthesis; molybdopterin biosynthesis. In terms of biological role, catalyzes the cyclization of GTP to (8S)-3',8-cyclo-7,8-dihydroguanosine 5'-triphosphate. The sequence is that of GTP 3',8-cyclase from Corynebacterium glutamicum (strain ATCC 13032 / DSM 20300 / JCM 1318 / BCRC 11384 / CCUG 27702 / LMG 3730 / NBRC 12168 / NCIMB 10025 / NRRL B-2784 / 534).